Reading from the N-terminus, the 104-residue chain is MCWVGENIEKTTKINYRYDDVNKVLDKINSCIVDKYNANKYVLCTHEILLKKKVSLHRYLIAVSDADDLTPEILDYLKFNYPDVKVLTELPESADKLNKIIENN.

It belongs to the mimivirus L28/L54 family.

This is an uncharacterized protein from Acanthamoeba polyphaga mimivirus (APMV).